The following is a 207-amino-acid chain: Large ribosomal subunit protein bL25 (207 aa).

It belongs to the bacterial ribosomal protein bL25 family. CTC subfamily. In terms of assembly, part of the 50S ribosomal subunit; part of the 5S rRNA/L5/L18/L25 subcomplex. Contacts the 5S rRNA. Binds to the 5S rRNA independently of L5 and L18.

Its function is as follows. This is one of the proteins that binds to the 5S RNA in the ribosome where it forms part of the central protuberance. The sequence is that of Large ribosomal subunit protein bL25 from Orientia tsutsugamushi (strain Ikeda) (Rickettsia tsutsugamushi).